The primary structure comprises 105 residues: MALRYPMAVGLNKGHKVTKNVSKPRHSRRRRRLTKHTKFVRDMIREVCGFAPYERRAMELLKVSKDKRALKFIKKRVGTHIRAKRKREELSSVLAAMRKAAAKKD.

The interval 9-31 is disordered; that stretch reads VGLNKGHKVTKNVSKPRHSRRRR. The span at 13-31 shows a compositional bias: basic residues; sequence KGHKVTKNVSKPRHSRRRR. Residue Lys-62 is modified to N6-acetyllysine.

The protein belongs to the eukaryotic ribosomal protein eL36 family. As to quaternary structure, component of the large ribosomal subunit.

It is found in the cytoplasm. The protein localises to the cytosol. Component of the large ribosomal subunit. The ribosome is a large ribonucleoprotein complex responsible for the synthesis of proteins in the cell. The polypeptide is Large ribosomal subunit protein eL36 (RPL36) (Oryctolagus cuniculus (Rabbit)).